Consider the following 275-residue polypeptide: Adenosylcobinamide-GDP ribazoletransferase (275 aa).

6 helical membrane-spanning segments follow: residues 53-73 (WFVF…TISL), 113-133 (VGSF…LGVS), 144-164 (LPFT…LYFV), 204-224 (FACI…PYFL), 225-245 (LSLL…KRWI), and 253-273 (LGAV…FVWI).

The protein belongs to the CobS family. Mg(2+) serves as cofactor.

It is found in the cell inner membrane. The enzyme catalyses alpha-ribazole + adenosylcob(III)inamide-GDP = adenosylcob(III)alamin + GMP + H(+). The catalysed reaction is alpha-ribazole 5'-phosphate + adenosylcob(III)inamide-GDP = adenosylcob(III)alamin 5'-phosphate + GMP + H(+). The protein operates within cofactor biosynthesis; adenosylcobalamin biosynthesis; adenosylcobalamin from cob(II)yrinate a,c-diamide: step 7/7. Its function is as follows. Joins adenosylcobinamide-GDP and alpha-ribazole to generate adenosylcobalamin (Ado-cobalamin). Also synthesizes adenosylcobalamin 5'-phosphate from adenosylcobinamide-GDP and alpha-ribazole 5'-phosphate. The chain is Adenosylcobinamide-GDP ribazoletransferase from Leptospira biflexa serovar Patoc (strain Patoc 1 / Ames).